The chain runs to 314 residues: Glycerate dehydrogenase (314 aa).

NAD(+) is bound by residues Thr-74, 157–158, 228–230, and Asp-254; these read AL and TAR. Arg-230 is an active-site residue. Glu-259 is a catalytic residue. The active-site Proton donor is His-280. 280–283 is an NAD(+) binding site; that stretch reads HVAW.

Belongs to the D-isomer specific 2-hydroxyacid dehydrogenase family. In terms of assembly, homodimer.

The protein localises to the cytoplasm. It catalyses the reaction (R)-glycerate + NAD(+) = 3-hydroxypyruvate + NADH + H(+). Its pathway is one-carbon metabolism; formaldehyde assimilation via serine pathway. In terms of biological role, plays a central role in assimilation of carbon. It converts hydroxypyruvate to glycerate as a key step in the serine cycle, and may also play an important role in C2 reactions, by interconverting glyoxylate and glycolate. The sequence is that of Glycerate dehydrogenase (hprA) from Methylorubrum extorquens (strain ATCC 14718 / DSM 1338 / JCM 2805 / NCIMB 9133 / AM1) (Methylobacterium extorquens).